A 222-amino-acid polypeptide reads, in one-letter code: Large ribosomal subunit protein uL4 (222 aa).

Positions 67 to 87 (QKGTGNARAGSKRTNVRRGGG) are disordered.

Belongs to the universal ribosomal protein uL4 family. Part of the 50S ribosomal subunit.

Its function is as follows. One of the primary rRNA binding proteins, this protein initially binds near the 5'-end of the 23S rRNA. It is important during the early stages of 50S assembly. It makes multiple contacts with different domains of the 23S rRNA in the assembled 50S subunit and ribosome. Functionally, forms part of the polypeptide exit tunnel. The polypeptide is Large ribosomal subunit protein uL4 (Rhodopirellula baltica (strain DSM 10527 / NCIMB 13988 / SH1)).